The following is a 223-amino-acid chain: Ribonuclease T (223 aa).

The 175-residue stretch at 20–194 folds into the Exonuclease domain; it reads VVIDVETAGF…YDTERTAELF (175 aa). The Mg(2+) site is built by D23, E25, H181, and D186. The active-site Proton donor/acceptor is H181.

It belongs to the RNase T family. In terms of assembly, homodimer. The cofactor is Mg(2+).

Trims short 3' overhangs of a variety of RNA species, leaving a one or two nucleotide 3' overhang. Responsible for the end-turnover of tRNA: specifically removes the terminal AMP residue from uncharged tRNA (tRNA-C-C-A). Also appears to be involved in tRNA biosynthesis. The chain is Ribonuclease T from Shewanella sp. (strain W3-18-1).